Reading from the N-terminus, the 162-residue chain is Photosystem II extrinsic protein V (162 aa).

Residues 1-26 form the signal peptide; sequence MFNKNFWTSIIIGCLFCTITYSGVNA. Heme c is bound by residues C62, C65, H66, and H117.

The protein belongs to the cytochrome c family. PsbV subfamily. As to quaternary structure, PSII is composed of 1 copy each of membrane proteins PsbA, PsbB, PsbC, PsbD, PsbE, PsbF, PsbH, PsbI, PsbJ, PsbK, PsbL, PsbM, PsbT, PsbX, PsbY, PsbZ, Psb30/Ycf12, at least 3 peripheral proteins of the oxygen-evolving complex and a large number of cofactors. It forms dimeric complexes. The cofactor is heme c.

The protein localises to the plastid. The protein resides in the cyanelle thylakoid membrane. Its function is as follows. One of the extrinsic, lumenal subunits of photosystem II (PSII). PSII is a light-driven water plastoquinone oxidoreductase, using light energy to abstract electrons from H(2)O, generating a proton gradient subsequently used for ATP formation. The extrinsic proteins stabilize the structure of photosystem II oxygen-evolving complex (OEC), the ion environment of oxygen evolution and protect the OEC against heat-induced inactivation. This is Photosystem II extrinsic protein V from Cyanophora paradoxa.